Reading from the N-terminus, the 65-residue chain is Myosin-11 (65 aa).

The 65-residue stretch at 1–65 folds into the Myosin motor domain; sequence RSGKLDAFLV…NWQWWRLFTK (65 aa).

The protein belongs to the TRAFAC class myosin-kinesin ATPase superfamily. Myosin family. Muscle myosin is a hexameric protein that consists of 2 heavy chain subunits (MHC), 2 alkali light chain subunits (MLC) and 2 regulatory light chain subunits (MLC-2).

The protein resides in the melanosome. Its subcellular location is the cytoplasm. It localises to the myofibril. Its function is as follows. Muscle contraction. This is Myosin-11 (MYH11) from Sus scrofa (Pig).